The chain runs to 188 residues: Adenylate kinase (188 aa).

10–15 is an ATP binding site; it reads GCGKGT. The NMP stretch occupies residues 30 to 59; it reads STGDMLRHARAAGTELGRRVAAIMDGGNLV. AMP-binding positions include threonine 31, arginine 36, 57–59, 85–88, and glutamine 92; these read NLV and GFPR. The LID stretch occupies residues 126–136; it reads KRAEEEGRPDD. Arginine 127 is an ATP binding site. Positions 133 and 144 each coordinate AMP. Glycine 172 lines the ATP pocket.

Belongs to the adenylate kinase family. In terms of assembly, monomer.

It is found in the cytoplasm. It catalyses the reaction AMP + ATP = 2 ADP. Its pathway is purine metabolism; AMP biosynthesis via salvage pathway; AMP from ADP: step 1/1. Its function is as follows. Catalyzes the reversible transfer of the terminal phosphate group between ATP and AMP. Plays an important role in cellular energy homeostasis and in adenine nucleotide metabolism. This chain is Adenylate kinase, found in Maricaulis maris (strain MCS10) (Caulobacter maris).